The primary structure comprises 57 residues: uncharacterized protein (57 aa).

Positions M1–G24 are cleaved as a signal peptide.

Prismatic layer of shell (at protein level).

Its subcellular location is the secreted. This is an uncharacterized protein from Margaritifera margaritifera (Freshwater pearl mussel).